A 362-amino-acid chain; its full sequence is MKKIQTFIQTSPVCSYTEWDLLEEIIVGVVDGACIPPWHAAMEPCLPTQQHQFFRDNAGKPFPQERIDLARKELDEFARILECEGVKVRRPEPKNQSLVYGAPGWSSTGMYAAMPRDVLLVVGTDIIECPLAWRSRYFETAAYKKLLKEYFHGGAKWSSGPKPELSDEQYVDGWVEDEAATSANLVITEFEPTFDAADFTRLGKDIIAQKSNVTNEFGINWLQRHLGDDYKIHVLEFNDMHPMHIDATLVPLAPGKLLINPERVQKMPEIFRGWDAIHAPKPIMPDSHPLYMTSKWINMNILMLDERRVVVERQDEPMIKAMKGAGFEPILCDFRNFNSFGGSFHCATVDIRRRGKLESYLV.

Residues aspartate 195 and histidine 244 contribute to the active site. Residue cysteine 346 is the Amidino-cysteine intermediate of the active site.

Belongs to the amidinotransferase family.

The catalysed reaction is L-lysine + L-arginine = L-homoarginine + L-ornithine. It carries out the reaction L-canavanine + L-ornithine = L-canaline + L-arginine + H(+). Involved in the biosynthesis of phaseolotoxin, a nonhost-specific toxin which is a key component in the development of the halo blight disease of beans. Catalyzes the transfer of an amidino group from arginine to lysine to produce one molecule of homoarginine and one molecule of ornithine, both being precursors in the biosynthesis of phaseolotoxin. Can also use L-canavanine as an alternative amidine donor with L-ornithine as amidine acceptor. The sequence is that of L-arginine:L-lysine amidinotransferase from Pseudomonas savastanoi pv. phaseolicola (Pseudomonas syringae pv. phaseolicola).